Reading from the N-terminus, the 325-residue chain is GTP 3',8-cyclase (325 aa).

A Radical SAM core domain is found at 1 to 226; sequence MNTVNYLRIS…EGACYGNGPA (226 aa). Position 8 (Arg-8) interacts with GTP. [4Fe-4S] cluster contacts are provided by Cys-15 and Cys-19. Tyr-21 is a binding site for S-adenosyl-L-methionine. Cys-22 is a [4Fe-4S] cluster binding site. Arg-60 serves as a coordination point for GTP. Gly-64 is a binding site for S-adenosyl-L-methionine. Ser-91 contacts GTP. Position 115 (Ser-115) interacts with S-adenosyl-L-methionine. Lys-152 contributes to the GTP binding site. Position 186 (Met-186) interacts with S-adenosyl-L-methionine. Residues Cys-249 and Cys-252 each coordinate [4Fe-4S] cluster. 254-256 is a GTP binding site; the sequence is RVR. [4Fe-4S] cluster is bound at residue Cys-266.

It belongs to the radical SAM superfamily. MoaA family. In terms of assembly, monomer and homodimer. [4Fe-4S] cluster serves as cofactor.

It catalyses the reaction GTP + AH2 + S-adenosyl-L-methionine = (8S)-3',8-cyclo-7,8-dihydroguanosine 5'-triphosphate + 5'-deoxyadenosine + L-methionine + A + H(+). The protein operates within cofactor biosynthesis; molybdopterin biosynthesis. Its function is as follows. Catalyzes the cyclization of GTP to (8S)-3',8-cyclo-7,8-dihydroguanosine 5'-triphosphate. The sequence is that of GTP 3',8-cyclase from Gloeobacter violaceus (strain ATCC 29082 / PCC 7421).